Consider the following 440-residue polypeptide: Trigger factor (440 aa).

Residues 163-248 enclose the PPIase FKBP-type domain; it reads GMVLTVDFSF…LKEIKKKELP (86 aa).

Belongs to the FKBP-type PPIase family. Tig subfamily.

It is found in the cytoplasm. The catalysed reaction is [protein]-peptidylproline (omega=180) = [protein]-peptidylproline (omega=0). Functionally, involved in protein export. Acts as a chaperone by maintaining the newly synthesized protein in an open conformation. Functions as a peptidyl-prolyl cis-trans isomerase. In Trichlorobacter lovleyi (strain ATCC BAA-1151 / DSM 17278 / SZ) (Geobacter lovleyi), this protein is Trigger factor.